The primary structure comprises 189 residues: Tumor protein p53-inducible protein 11 (189 aa).

Residues 1-63 (MAAKQPPPLM…FAVREPLGLR (63 aa)) lie on the Cytoplasmic side of the membrane. Ser-14 carries the phosphoserine modification. Residues 64–84 (VWQFVSAVLFSGIAIMALAFP) form a helical membrane-spanning segment. At 85-108 (DQLYDAVFDGAQVTSKTPIRLYGG) the chain is on the extracellular side. The helical transmembrane segment at 109–129 (ALLSISLIMWNALYTAEKVII) threads the bilayer. Arg-130 is a topological domain (cytoplasmic). A helical membrane pass occupies residues 131–151 (WTLLTEACYFSVQFLVVTATL). Topologically, residues 152 to 159 (AETGLASQ) are extracellular. A helical membrane pass occupies residues 160-180 (GILLLLASRLLFVAISVYYYY). The Cytoplasmic portion of the chain corresponds to 181–189 (QVGRKPKKV).

It localises to the membrane. This is Tumor protein p53-inducible protein 11 (TP53I11) from Bos taurus (Bovine).